Here is a 280-residue protein sequence, read N- to C-terminus: Small ribosomal subunit protein uS3 (280 aa).

The KH type-2 domain occupies 38–106 (IRRLLSTGLE…QVQLNILEVR (69 aa)). The interval 215 to 280 (AAAAPAGAER…PAAEPQSTES (66 aa)) is disordered. A compositionally biased stretch (low complexity) spans 238 to 280 (SGASGTTATGTEAGRAAASADESTAAGQPAEAAPAAEPQSTES).

The protein belongs to the universal ribosomal protein uS3 family. As to quaternary structure, part of the 30S ribosomal subunit. Forms a tight complex with proteins S10 and S14.

Its function is as follows. Binds the lower part of the 30S subunit head. Binds mRNA in the 70S ribosome, positioning it for translation. This chain is Small ribosomal subunit protein uS3, found in Mycolicibacterium paratuberculosis (strain ATCC BAA-968 / K-10) (Mycobacterium paratuberculosis).